The chain runs to 494 residues: Alpha-amylase-related protein (494 aa).

Residues 1 to 20 (MIKFALALTLCLAGASLSLA) form the signal peptide. Gln-21 carries the pyrrolidone carboxylic acid modification. A disulfide bridge connects residues Cys-48 and Cys-104. Positions 118, 169, and 178 each coordinate Ca(2+). An intrachain disulfide couples Cys-157 to Cys-171. Arg-206 provides a ligand contact to chloride. Asp-208 serves as the catalytic Nucleophile. His-212 contacts Ca(2+). Glu-245 functions as the Proton donor in the catalytic mechanism. Asn-308 and Arg-343 together coordinate chloride. Cystine bridges form between Cys-376–Cys-382, Cys-418–Cys-441, and Cys-448–Cys-460.

It belongs to the glycosyl hydrolase 13 family. As to quaternary structure, monomer. The cofactor is Ca(2+). Requires chloride as cofactor.

Its subcellular location is the secreted. The catalysed reaction is Endohydrolysis of (1-&gt;4)-alpha-D-glucosidic linkages in polysaccharides containing three or more (1-&gt;4)-alpha-linked D-glucose units.. This chain is Alpha-amylase-related protein (Amyrel), found in Drosophila serrata (Fruit fly).